The sequence spans 472 residues: Calcitonin gene-related peptide type 1 receptor (472 aa).

Residues 1 to 28 form the signal peptide; the sequence is MGLLLRSALFKYIIIVLIMLNLRGYVLA. Over 29–149 the chain is Extracellular; it reads EQEQGSQIPL…FTHEKVKTAL (121 aa). Cystine bridges form between C58-C84, C75-C115, and C98-C137. N76, N128, and N133 each carry an N-linked (GlcNAc...) asparagine glycan. Residues 150–174 form a helical membrane-spanning segment; sequence NLYYLTIIGHGLSIASLLISLGIFF. Residues 175-185 are Cytoplasmic-facing; sequence YFKNLSCQRIT. A helical membrane pass occupies residues 186–208; it reads LHKNLFFSFVCNSIITIISLSAV. Residues 209–219 are Extracellular-facing; it reads ANNQALVATNP. Residues 220–248 traverse the membrane as a helical segment; sequence VSCKISQFIHLYLMGCNYFWMLCEGIYLH. The Cytoplasmic segment spans residues 249–262; sequence TLIVVAVFAEKQHL. Residues 263–283 traverse the membrane as a helical segment; it reads MWYYLLGWGFPLIPACIHAVA. The Extracellular segment spans residues 284–299; that stretch reads RSLYYNDNCWISSETH. Residues 300 to 324 form a helical membrane-spanning segment; that stretch reads LLYIIHGPICAALLVNLFFLLNIVR. At 325-339 the chain is on the cytoplasmic side; the sequence is VLITKLKVTHQAESN. Residues 340-361 form a helical membrane-spanning segment; the sequence is LYMKAVRATLILVPLLGIEFVL. The Extracellular segment spans residues 362–376; sequence FPWKPEGRIAEEIYD. The helical transmembrane segment at 377 to 397 threads the bilayer; sequence YVMHILMHYQGLLVATIFCFF. Residues 398–472 are Cytoplasmic-facing; that stretch reads NGEVQAVLKR…VFFKTEKQYM (75 aa).

The protein belongs to the G-protein coupled receptor 2 family.

It is found in the cell membrane. In terms of biological role, may function as G protein-coupled receptor for calcitonin-gene-related peptides and adrenomedullin. Specificity may be modulated by accessory proteins. May activate cAMP-dependent pathway. In Xenopus tropicalis (Western clawed frog), this protein is Calcitonin gene-related peptide type 1 receptor (calcrl).